Here is a 121-residue protein sequence, read N- to C-terminus: MNHAPHLYFAWQQLVEKSQLMLRLATEEQWDELIASEMAYVNAVQEIAHLTEEVDPSTTMQEQLRPMLRLILDNESKVKQLLQIRMDELAKLVGQSSVQKSVLSAYGDQGGFVLAPQDNLF.

The interval 1–50 (MNHAPHLYFAWQQLVEKSQLMLRLATEEQWDELIASEMAYVNAVQEIAHL) is required for homodimerization. The tract at residues 60–98 (MQEQLRPMLRLILDNESKVKQLLQIRMDELAKLVGQSSV) is fliD binding.

This sequence belongs to the FliT family. Homodimer. Interacts with FliD and FlhC.

The protein localises to the cytoplasm. It is found in the cytosol. Functionally, dual-function protein that regulates the transcription of class 2 flagellar operons and that also acts as an export chaperone for the filament-capping protein FliD. As a transcriptional regulator, acts as an anti-FlhDC factor; it directly binds FlhC, thus inhibiting the binding of the FlhC/FlhD complex to class 2 promoters, resulting in decreased expression of class 2 flagellar operons. As a chaperone, effects FliD transition to the membrane by preventing its premature polymerization, and by directing it to the export apparatus. This is Flagellar protein FliT from Escherichia coli O157:H7.